Here is a 684-residue protein sequence, read N- to C-terminus: DNA ligase (684 aa).

NAD(+)-binding positions include 34–38, 83–84, and Glu117; these read DFQYD and SL. The N6-AMP-lysine intermediate role is filled by Lys119. 4 residues coordinate NAD(+): Arg140, Glu186, Lys300, and Lys324. 4 residues coordinate Zn(2+): Cys418, Cys421, Cys436, and Cys442. The BRCT domain maps to 601–684; sequence PVNLNFDGMK…EMLGEVGSNE (84 aa).

Belongs to the NAD-dependent DNA ligase family. LigA subfamily. It depends on Mg(2+) as a cofactor. The cofactor is Mn(2+).

It catalyses the reaction NAD(+) + (deoxyribonucleotide)n-3'-hydroxyl + 5'-phospho-(deoxyribonucleotide)m = (deoxyribonucleotide)n+m + AMP + beta-nicotinamide D-nucleotide.. In terms of biological role, DNA ligase that catalyzes the formation of phosphodiester linkages between 5'-phosphoryl and 3'-hydroxyl groups in double-stranded DNA using NAD as a coenzyme and as the energy source for the reaction. It is essential for DNA replication and repair of damaged DNA. The protein is DNA ligase of Chlorobium phaeobacteroides (strain BS1).